An 87-amino-acid polypeptide reads, in one-letter code: uncharacterized protein (87 aa).

An N-terminal signal peptide occupies residues 1-19 (MLVLLVAVLVTAVYAFVHA). Residues 39–59 (LVILGAAVALASILYPVLGVL) form a helical membrane-spanning segment.

This sequence to M.leprae ML2453.

The protein resides in the membrane. This is an uncharacterized protein from Mycobacterium bovis (strain ATCC BAA-935 / AF2122/97).